We begin with the raw amino-acid sequence, 328 residues long: Biotin synthase (328 aa).

The 225-residue stretch at 49–273 (FNKEKIETCS…ICISRIIMPE (225 aa)) folds into the Radical SAM core domain. [4Fe-4S] cluster contacts are provided by Cys-67, Cys-71, and Cys-74. Residues Ser-110, Cys-142, Cys-201, and Arg-277 each coordinate [2Fe-2S] cluster.

Belongs to the radical SAM superfamily. Biotin synthase family. Homodimer. Requires [4Fe-4S] cluster as cofactor. The cofactor is [2Fe-2S] cluster.

It carries out the reaction (4R,5S)-dethiobiotin + (sulfur carrier)-SH + 2 reduced [2Fe-2S]-[ferredoxin] + 2 S-adenosyl-L-methionine = (sulfur carrier)-H + biotin + 2 5'-deoxyadenosine + 2 L-methionine + 2 oxidized [2Fe-2S]-[ferredoxin]. It functions in the pathway cofactor biosynthesis; biotin biosynthesis; biotin from 7,8-diaminononanoate: step 2/2. Functionally, catalyzes the conversion of dethiobiotin (DTB) to biotin by the insertion of a sulfur atom into dethiobiotin via a radical-based mechanism. In Methanococcus vannielii (strain ATCC 35089 / DSM 1224 / JCM 13029 / OCM 148 / SB), this protein is Biotin synthase.